A 164-amino-acid polypeptide reads, in one-letter code: Cell cycle link protein (164 aa).

Residues 9-22 (LPEELKEKIMNEHL) form a binding to host SKP1 protein region. The LXCXE motif, interaction with host RBR signature appears at 111-115 (LYCSE).

Belongs to the nanovirus Clink protein family. As to quaternary structure, interacts with host SKP1. Interacts (via LXCXE domain) with host retinoblastoma-related protein 1 (RBR1). Interacts (via LXCXE domain) with retinoblastoma-related proteins (RBR).

Functionally, interacts with and disrupts the function of host retinoblastoma-related proteins RBR, which are key regulators of the cell cycle. Induces transcriptional activation of E2F-regulated S-phase and G2/M-phase-specific genes. Inactivation of the ability of RBR to arrest the cell cycle leads to the stimulation of viral DNA replication. This is Cell cycle link protein (DNA-C) from Trifolium subterraneum (Subterranean clover).